The chain runs to 154 residues: UPF0225 protein YPDSF_0962 (154 aa).

Belongs to the UPF0225 family.

In Yersinia pestis (strain Pestoides F), this protein is UPF0225 protein YPDSF_0962.